Reading from the N-terminus, the 336-residue chain is MSLQLGVIGTGAIGQDHIRRCSQTLQGCRVVAVTDIDPQQAARVLAGLTLEAEVYPDGHALIQAPEVQALLVTSWGPSHEEFVLAAIAAGKPVFCEKPLAVTAAGCRRIVEAEIAQGRRLVQVGFMRPYDAGYQALKAVVDSGRIGEPLMLHCAHRNPRVGENYKTDMAITDTLIHELDVLRWLLADDYVSVQVLFPRKTGKAHAQLRDPQIVLLETARGTRIDVEIFVNCQYGYDIQCEVVGESGIARLPEPPQVQLRSAASLSSAILMDWKERFIAAYDVELQAFVDGVRAGRVGGPSAWDGLAAAVAADACIEAQQSGAIVPISLPQRPALYA.

Belongs to the Gfo/Idh/MocA family. As to quaternary structure, homotetramer.

It catalyses the reaction myo-inositol + NAD(+) = scyllo-inosose + NADH + H(+). Functionally, involved in the oxidation of myo-inositol (MI) to 2-keto-myo-inositol (2KMI or 2-inosose). In Pseudomonas fluorescens (strain ATCC BAA-477 / NRRL B-23932 / Pf-5), this protein is Inositol 2-dehydrogenase.